Consider the following 203-residue polypeptide: Small ribosomal subunit protein uS4 (203 aa).

In terms of domain architecture, S4 RNA-binding spans 93 to 156; it reads RRLDNVVYRL…MKVPAILEAV (64 aa).

The protein belongs to the universal ribosomal protein uS4 family. As to quaternary structure, part of the 30S ribosomal subunit. Contacts protein S5. The interaction surface between S4 and S5 is involved in control of translational fidelity.

One of the primary rRNA binding proteins, it binds directly to 16S rRNA where it nucleates assembly of the body of the 30S subunit. Its function is as follows. With S5 and S12 plays an important role in translational accuracy. This Streptococcus pyogenes serotype M49 (strain NZ131) protein is Small ribosomal subunit protein uS4.